The sequence spans 430 residues: Enolase (430 aa).

Q166 is a (2R)-2-phosphoglycerate binding site. E208 serves as the catalytic Proton donor. Mg(2+) contacts are provided by D245, E288, and D315. The (2R)-2-phosphoglycerate site is built by K340, R369, S370, and K391. The Proton acceptor role is filled by K340.

This sequence belongs to the enolase family. The cofactor is Mg(2+).

It is found in the cytoplasm. Its subcellular location is the secreted. The protein resides in the cell surface. It catalyses the reaction (2R)-2-phosphoglycerate = phosphoenolpyruvate + H2O. Its pathway is carbohydrate degradation; glycolysis; pyruvate from D-glyceraldehyde 3-phosphate: step 4/5. Its function is as follows. Catalyzes the reversible conversion of 2-phosphoglycerate (2-PG) into phosphoenolpyruvate (PEP). It is essential for the degradation of carbohydrates via glycolysis. The chain is Enolase from Clostridium beijerinckii (strain ATCC 51743 / NCIMB 8052) (Clostridium acetobutylicum).